The sequence spans 242 residues: Intraflagellar transport-associated protein (242 aa).

S57 is subject to Phosphoserine.

In terms of assembly, interacts with IFT122; the interaction associates IFTAP with IFT-A complex.

Functionally, seems to play a role in ciliary BBSome localization, maybe through interaction with IFT-A complex. The polypeptide is Intraflagellar transport-associated protein (IFTAP) (Bos taurus (Bovine)).